The primary structure comprises 875 residues: Probable dipeptidyl-aminopeptidase B (875 aa).

Residues 1 to 90 (MSEPKPIQDT…ASSETTPPRK (90 aa)) are disordered. Residues 1–98 (MSEPKPIQDT…RKGVDRKLKK (98 aa)) are Cytoplasmic-facing. Low complexity predominate over residues 19-28 (SSISSASTTS). Basic and acidic residues predominate over residues 33–46 (RLAEESEKNHDASS). Residues 99–119 (VLLIVGGFFVAAWIVSLVVFL) form a helical; Signal-anchor for type II membrane protein membrane-spanning segment. Over 120–875 (TNKSYKHGSQ…VNDAKPKIES (756 aa)) the chain is Vacuolar. N-linked (GlcNAc...) asparagine glycans are attached at residues asparagine 354 and asparagine 567. The interval 689–715 (VDFQSSDGGRRTTRSPRRATGRPSATS) is disordered. A compositionally biased stretch (basic residues) spans 699–708 (RTTRSPRRAT). Residue serine 726 is the Charge relay system of the active site. Asparagine 785 carries N-linked (GlcNAc...) asparagine glycosylation. Residues aspartate 803 and histidine 836 each act as charge relay system in the active site.

This sequence belongs to the peptidase S9B family.

The protein resides in the vacuole membrane. It catalyses the reaction Release of an N-terminal dipeptide, Xaa-Yaa-|-Zaa-, from a polypeptide, preferentially when Yaa is Pro, provided Zaa is neither Pro nor hydroxyproline.. Type IV dipeptidyl-peptidase which removes N-terminal dipeptides sequentially from polypeptides having unsubstituted N-termini provided that the penultimate residue is proline. This is Probable dipeptidyl-aminopeptidase B (DAPB) from Verticillium alfalfae (strain VaMs.102 / ATCC MYA-4576 / FGSC 10136) (Verticillium wilt of alfalfa).